The chain runs to 342 residues: Pre-mRNA-splicing factor 18 (342 aa).

M1 bears the N-acetylmethionine mark.

This sequence belongs to the PRP18 family. In terms of assembly, heterodimer with PPIH. Interacts with PRPF4 and with the spliceosome. Part of a complex containing U4/U6 snRNPs.

It is found in the nucleus speckle. Functionally, participates in the second step of pre-mRNA splicing. This is Pre-mRNA-splicing factor 18 (PRPF18) from Bos taurus (Bovine).